A 273-amino-acid polypeptide reads, in one-letter code: UPF0380 protein YafZ (273 aa).

It belongs to the UPF0380 family.

This is UPF0380 protein YafZ (yafZ) from Escherichia coli (strain K12).